The chain runs to 540 residues: Phosphatidylinositol 4-phosphate 5-kinase type-1 beta (540 aa).

Residues 1–23 (MSSVTENGDVTAGKPNEEKTYKK) form a disordered region. The PIPK domain maps to 25 to 395 (TSSAIKGAIQ…RFLKFMNTRV (371 aa)).

The protein localises to the cytoplasm. Its subcellular location is the cytosol. It is found in the cell membrane. It localises to the endomembrane system. The catalysed reaction is a 1,2-diacyl-sn-glycero-3-phospho-(1D-myo-inositol 4-phosphate) + ATP = a 1,2-diacyl-sn-glycero-3-phospho-(1D-myo-inositol-4,5-bisphosphate) + ADP + H(+). The enzyme catalyses 1-octadecanoyl-2-(5Z,8Z,11Z,14Z)-eicosatetraenoyl-sn-glycero-3-phospho-1D-myo-inositol 4-phosphate + ATP = 1-octadecanoyl-2-(5Z,8Z,11Z,14Z)-eicosatetraenoyl-sn-glycero-3-phospho-1D-myo-inositol 4,5-bisphosphate + ADP + H(+). It catalyses the reaction 1-octadecanoyl-2-(9Z)-octadecenoyl-sn-glycero-3-phospho-1D-myo-inositol 4-phosphate + ATP = 1-octadecanoyl-2-(9Z)-octadecenoyl-sn-glycero-3-phospho-1D-myo-inositol 4,5-bisphosphate + ADP + H(+). It carries out the reaction 1-octadecanoyl-2-(9Z)-octadecenoyl-sn-glycero-3-phospho-1D-myo-inositol + ATP = 1-octadecanoyl-2-(9Z)-octadecenoyl-sn-glycero-3-phospho-1D-myo-inositol 5-phosphate + ADP + H(+). The catalysed reaction is 1-octadecanoyl-2-(9Z,12Z)-octadecadienoyl-sn-glycero-3-phospho-1D-myo-inositol + ATP = 1-octadecanoyl-2-(9Z,12Z)-octadecadienoyl-sn-glycero-3-phospho-1D-myo-inositol 5-phosphate + ADP + H(+). The enzyme catalyses 1-octadecanoyl-2-(5Z,8Z,11Z,14Z-eicosatetraenoyl)-sn-glycero-3-phospho-(1D-myo-inositol) + ATP = 1-octadecanoyl-2-(5Z,8Z,11Z,14Z)-eicosatetraenoyl-sn-glycero-3-phospho-1D-myo-inositol 5-phosphate + ADP + H(+). It catalyses the reaction 1,2-di-(9Z,12Z)-octadecadienoyl-sn-glycero-3-phospho-1D-myo-inositol + ATP = 1,2-di(9Z,12Z)-octadecadienoyl-sn-glycero-3-phospho-1D-myo-inositol 5-phosphate + ADP + H(+). Functionally, catalyzes the phosphorylation of phosphatidylinositol 4-phosphate (PtdIns(4)P/PI4P) to form phosphatidylinositol 4,5-bisphosphate (PtdIns(4,5)P2/PIP2), a lipid second messenger that regulates several cellular processes such as signal transduction, vesicle trafficking, actin cytoskeleton dynamics, cell adhesion, and cell motility. PtdIns(4,5)P2 can directly act as a second messenger or can be utilized as a precursor to generate other second messengers: inositol 1,4,5-trisphosphate (IP3), diacylglycerol (DAG) or phosphatidylinositol-3,4,5-trisphosphate (PtdIns(3,4,5)P3/PIP3). The polypeptide is Phosphatidylinositol 4-phosphate 5-kinase type-1 beta (PIP5K1B) (Gallus gallus (Chicken)).